Consider the following 240-residue polypeptide: MAQTSKYKRVVLKLSGEALAGDKGFGINPIIIKSVAQQVAEVAKMDCEIAVIVGGGNIWRGKTGSDLGMDRGTADYMGMLATVMNALALQDSLEQLDCDTRVLTSIEMKQVAEPYIRRRAIRHLEKKRVVIFAAGIGNPYFSTDTTAALRAAEVEADVILMGKNNVDGVYSADPKVDANAIKYEHLTHIQMLQEGLQVMDSTASSFCMDNNIPLNVFSIMEEGNIKRAVMGEKIGTLITK.

Residue 13–16 (KLSG) participates in ATP binding. The segment at 21 to 26 (GDKGFG) is involved in allosteric activation by GTP. Position 55 (Gly-55) interacts with UMP. ATP-binding residues include Gly-56 and Arg-60. Residues Asp-75 and 136–143 (IGNPYFST) contribute to the UMP site. Positions 164, 170, and 173 each coordinate ATP.

The protein belongs to the UMP kinase family. As to quaternary structure, homohexamer.

It is found in the cytoplasm. The catalysed reaction is UMP + ATP = UDP + ADP. It functions in the pathway pyrimidine metabolism; CTP biosynthesis via de novo pathway; UDP from UMP (UMPK route): step 1/1. With respect to regulation, allosterically activated by GTP. Inhibited by UTP. In terms of biological role, catalyzes the reversible phosphorylation of UMP to UDP. This chain is Uridylate kinase, found in Staphylococcus epidermidis (strain ATCC 35984 / DSM 28319 / BCRC 17069 / CCUG 31568 / BM 3577 / RP62A).